The chain runs to 67 residues: uncharacterized protein (67 aa).

This sequence belongs to the flocculin family.

This is an uncharacterized protein from Saccharomyces cerevisiae (strain ATCC 204508 / S288c) (Baker's yeast).